Reading from the N-terminus, the 62-residue chain is UPF0291 protein CLI_2672 (62 aa).

This sequence belongs to the UPF0291 family.

It is found in the cytoplasm. In Clostridium botulinum (strain Langeland / NCTC 10281 / Type F), this protein is UPF0291 protein CLI_2672.